The primary structure comprises 433 residues: Protein disulfide-isomerase A6 homolog (433 aa).

The signal sequence occupies residues 1–19 (MRQLASILLLAFVVGSVSA). 2 consecutive Thioredoxin domains span residues 20–119 (FYSP…GQRT) and 120–267 (AKAI…KHVA). Residues cysteine 55, cysteine 58, cysteine 186, and cysteine 189 each act as nucleophile in the active site. Cystine bridges form between cysteine 55/cysteine 58 and cysteine 186/cysteine 189. The N-linked (GlcNAc...) asparagine glycan is linked to asparagine 279. Positions 405-433 (VDPWDGKDGQLPTEEDIDLSDIDLDKDEL) are disordered. Acidic residues predominate over residues 417–433 (TEEDIDLSDIDLDKDEL). The Prevents secretion from ER motif lies at 430 to 433 (KDEL).

This sequence belongs to the protein disulfide isomerase family. Interacts with Drpr (via extracellular region). In terms of tissue distribution, in the blastoderm embryo, expression starts at the anterior and posterior poles and later appears as broad stripes. Following gastrulation, expressed in midline precursor cells and the posterior head with low levels present throughout the embryo. During germ band extension, weak dorsoventral stripes of expression are evident. Midline expression begins and is retained throughout embryogenesis in clusters of cells in each segment in the central nervous system. At least some of the midline expression occurs in VUM neurons.

It localises to the endoplasmic reticulum lumen. The protein resides in the cell surface. It carries out the reaction Catalyzes the rearrangement of -S-S- bonds in proteins.. Its function is as follows. Binds to both apoptotic cells and phagocytes and promotes Drpr-dependent phagocytosis of apoptotic cells. In Drosophila melanogaster (Fruit fly), this protein is Protein disulfide-isomerase A6 homolog.